A 321-amino-acid chain; its full sequence is Glutaminase (321 aa).

Substrate-binding residues include S69, N120, E165, N172, Y196, Y248, and V266.

It belongs to the glutaminase family. As to quaternary structure, homotetramer.

The enzyme catalyses L-glutamine + H2O = L-glutamate + NH4(+). In Bacteroides fragilis (strain ATCC 25285 / DSM 2151 / CCUG 4856 / JCM 11019 / LMG 10263 / NCTC 9343 / Onslow / VPI 2553 / EN-2), this protein is Glutaminase.